Reading from the N-terminus, the 519-residue chain is T-complex protein 11-like protein 2 (519 aa).

The disordered stretch occupies residues M1 to L30. Phosphoserine is present on S16. Residues D17 to S29 are compositionally biased toward low complexity.

It belongs to the TCP11 family. Interacts with FMNL2; this interaction promotes muscle-derived satellite cell (MDSC) migration and differentiation.

Its subcellular location is the cytoplasm. It localises to the cytoskeleton. In terms of biological role, promotes the migration of muscle-derived satellite cells (MDSCs) during differentiation throught interaction with FMNL2 and therefore may participate in microfilament assembly. The protein is T-complex protein 11-like protein 2 of Homo sapiens (Human).